Consider the following 302-residue polypeptide: 4-hydroxy-tetrahydrodipicolinate synthase (302 aa).

Thr-46 lines the pyruvate pocket. Residue Tyr-134 is the Proton donor/acceptor of the active site. Lys-162 (schiff-base intermediate with substrate) is an active-site residue. Val-204 serves as a coordination point for pyruvate.

It belongs to the DapA family. Homotetramer; dimer of dimers.

The protein resides in the cytoplasm. It carries out the reaction L-aspartate 4-semialdehyde + pyruvate = (2S,4S)-4-hydroxy-2,3,4,5-tetrahydrodipicolinate + H2O + H(+). Its pathway is amino-acid biosynthesis; L-lysine biosynthesis via DAP pathway; (S)-tetrahydrodipicolinate from L-aspartate: step 3/4. Its function is as follows. Catalyzes the condensation of (S)-aspartate-beta-semialdehyde [(S)-ASA] and pyruvate to 4-hydroxy-tetrahydrodipicolinate (HTPA). The protein is 4-hydroxy-tetrahydrodipicolinate synthase of Xylella fastidiosa (strain Temecula1 / ATCC 700964).